Consider the following 205-residue polypeptide: N-(5'-phosphoribosyl)anthranilate isomerase (205 aa).

The protein belongs to the TrpF family.

The enzyme catalyses N-(5-phospho-beta-D-ribosyl)anthranilate = 1-(2-carboxyphenylamino)-1-deoxy-D-ribulose 5-phosphate. It participates in amino-acid biosynthesis; L-tryptophan biosynthesis; L-tryptophan from chorismate: step 3/5. In Thermotoga neapolitana (strain ATCC 49049 / DSM 4359 / NBRC 107923 / NS-E), this protein is N-(5'-phosphoribosyl)anthranilate isomerase.